A 211-amino-acid polypeptide reads, in one-letter code: uncharacterized protein (211 aa).

The segment at 1-43 (MRPEVGREPAALQPRQRPRSDHQLHRSPFTVPPRTPACRSPGP) is disordered.

This is an uncharacterized protein from Homo sapiens (Human).